The following is a 510-amino-acid chain: uncharacterized protein (510 aa).

Positions 1–19 (MLILLILYFLFLQLHIFDS) are cleaved as a signal peptide. Residues 28-48 (IYIHYAICKFIFLLEIYKLIA) traverse the membrane as a helical segment.

The protein localises to the host membrane. This is an uncharacterized protein from Sulfolobus islandicus rod-shaped virus 1 (SIRV-1).